Consider the following 380-residue polypeptide: Queuine tRNA-ribosyltransferase (380 aa).

Residue Asp96 is the Proton acceptor of the active site. Substrate-binding positions include Asp96–Phe100, Asp150, Gln193, and Gly220. Positions Gly251 to Ser257 are RNA binding. Asp270 functions as the Nucleophile in the catalytic mechanism. The interval Thr275–Arg279 is RNA binding; important for wobble base 34 recognition. The Zn(2+) site is built by Cys308, Cys310, Cys313, and His339.

It belongs to the queuine tRNA-ribosyltransferase family. Homodimer. Within each dimer, one monomer is responsible for RNA recognition and catalysis, while the other monomer binds to the replacement base PreQ1. Requires Zn(2+) as cofactor.

It catalyses the reaction 7-aminomethyl-7-carbaguanine + guanosine(34) in tRNA = 7-aminomethyl-7-carbaguanosine(34) in tRNA + guanine. It participates in tRNA modification; tRNA-queuosine biosynthesis. Catalyzes the base-exchange of a guanine (G) residue with the queuine precursor 7-aminomethyl-7-deazaguanine (PreQ1) at position 34 (anticodon wobble position) in tRNAs with GU(N) anticodons (tRNA-Asp, -Asn, -His and -Tyr). Catalysis occurs through a double-displacement mechanism. The nucleophile active site attacks the C1' of nucleotide 34 to detach the guanine base from the RNA, forming a covalent enzyme-RNA intermediate. The proton acceptor active site deprotonates the incoming PreQ1, allowing a nucleophilic attack on the C1' of the ribose to form the product. After dissociation, two additional enzymatic reactions on the tRNA convert PreQ1 to queuine (Q), resulting in the hypermodified nucleoside queuosine (7-(((4,5-cis-dihydroxy-2-cyclopenten-1-yl)amino)methyl)-7-deazaguanosine). The chain is Queuine tRNA-ribosyltransferase from Streptococcus thermophilus (strain ATCC BAA-491 / LMD-9).